The primary structure comprises 267 residues: MSRIGVAFDQARAEGRAVLVGCMPAGFPTVEGSIAAMTAMVEAGVDVIEVEIPYSDPVMDGPVIQRASDVALAGGVRVADTLRIVEAVAATGAPVVTMTYWNPVEQYGVDAFARDLAAAGGTGLITPDLIPDEAQEWLAASDAYGLDRTFLVSPSSTDARLHMTVEQCRGFVYATTIMGVTGARAQASAAAPVLVSRVRAVTDLPVGVGLGIGTGEQASTASSFADGVIVGSALIRRLLDAPNLPAGLTALRELSAELAAGVRTPAP.

Catalysis depends on proton acceptor residues Glu49 and Asp60.

Belongs to the TrpA family. Tetramer of two alpha and two beta chains.

It catalyses the reaction (1S,2R)-1-C-(indol-3-yl)glycerol 3-phosphate + L-serine = D-glyceraldehyde 3-phosphate + L-tryptophan + H2O. Its pathway is amino-acid biosynthesis; L-tryptophan biosynthesis; L-tryptophan from chorismate: step 5/5. Its function is as follows. The alpha subunit is responsible for the aldol cleavage of indoleglycerol phosphate to indole and glyceraldehyde 3-phosphate. The polypeptide is Tryptophan synthase alpha chain (Salinispora tropica (strain ATCC BAA-916 / DSM 44818 / JCM 13857 / NBRC 105044 / CNB-440)).